The primary structure comprises 342 residues: Methylthioribose-1-phosphate isomerase (342 aa).

Substrate is bound by residues 49–51, arginine 86, and glutamine 187; that span reads RGA. Residue aspartate 228 is the Proton donor of the active site. 238-239 is a substrate binding site; sequence NK.

This sequence belongs to the eIF-2B alpha/beta/delta subunits family. MtnA subfamily.

It catalyses the reaction 5-(methylsulfanyl)-alpha-D-ribose 1-phosphate = 5-(methylsulfanyl)-D-ribulose 1-phosphate. It participates in amino-acid biosynthesis; L-methionine biosynthesis via salvage pathway; L-methionine from S-methyl-5-thio-alpha-D-ribose 1-phosphate: step 1/6. Catalyzes the interconversion of methylthioribose-1-phosphate (MTR-1-P) into methylthioribulose-1-phosphate (MTRu-1-P). This Enterobacter sp. (strain 638) protein is Methylthioribose-1-phosphate isomerase.